A 431-amino-acid polypeptide reads, in one-letter code: Glutamate-1-semialdehyde 2,1-aminomutase (431 aa).

The residue at position 265 (lysine 265) is an N6-(pyridoxal phosphate)lysine.

It belongs to the class-III pyridoxal-phosphate-dependent aminotransferase family. HemL subfamily. In terms of assembly, homodimer. Pyridoxal 5'-phosphate is required as a cofactor.

The protein resides in the cytoplasm. The enzyme catalyses (S)-4-amino-5-oxopentanoate = 5-aminolevulinate. It participates in porphyrin-containing compound metabolism; protoporphyrin-IX biosynthesis; 5-aminolevulinate from L-glutamyl-tRNA(Glu): step 2/2. The polypeptide is Glutamate-1-semialdehyde 2,1-aminomutase (Vibrio atlanticus (strain LGP32) (Vibrio splendidus (strain Mel32))).